The primary structure comprises 292 residues: Acidic endochitinase (292 aa).

Residues 1-25 form the signal peptide; it reads MAAHKITTTLSIFFLLSSIFRSSDA. One can recognise a GH18 domain in the interval 26–292; sequence AGIAIYWGQN…YSDSIKGSIG (267 aa). Disulfide bonds link Cys45–Cys92 and Cys75–Cys82. Glu152 (proton donor) is an active-site residue. An intrachain disulfide couples Cys180 to Cys209.

The protein belongs to the glycosyl hydrolase 18 family. Chitinase class II subfamily.

It localises to the secreted. The protein resides in the extracellular space. It catalyses the reaction Random endo-hydrolysis of N-acetyl-beta-D-glucosaminide (1-&gt;4)-beta-linkages in chitin and chitodextrins.. Its function is as follows. This protein functions as a defense against chitin containing fungal pathogens. The sequence is that of Acidic endochitinase from Cucumis sativus (Cucumber).